Consider the following 212-residue polypeptide: ER lumen protein-retaining receptor 1 (212 aa).

The Lumenal segment spans residues M1 to F4. The helical transmembrane segment at R5–W24 threads the bilayer. Residues K25–I32 are Cytoplasmic-facing. A helical membrane pass occupies residues S33–F52. An interaction with the K-D-E-L motif on target proteins region spans residues R47–Y48. The Lumenal segment spans residues T53–L58. A helical membrane pass occupies residues Y59–Y79. The Cytoplasmic portion of the chain corresponds to S80–T92. Residues F93 to N110 traverse the membrane as a helical segment. Residues H111–L116 are Lumenal-facing. The chain crosses the membrane as a helical span at residues E117 to L135. The Cytoplasmic segment spans residues F136–S149. Residues H150–W168 form a helical membrane-spanning segment. Positions R159 to R169 are interaction with the K-D-E-L motif on target proteins. At R169 to L178 the chain is on the lumenal side. A helical transmembrane segment spans residues I179–I199. The Cytoplasmic portion of the chain corresponds to T200–A212. Positions K204–K207 are important for recycling of cargo proteins with the sequence motif K-D-E-L from the Golgi to the endoplasmic reticulum.

The protein belongs to the ERD2 family.

The protein localises to the golgi apparatus membrane. The protein resides in the cytoplasmic vesicle. It localises to the COPI-coated vesicle membrane. Its subcellular location is the endoplasmic reticulum membrane. It is found in the endoplasmic reticulum-Golgi intermediate compartment membrane. Receptor for the C-terminal sequence motif K-D-E-L that is present on endoplasmic reticulum resident proteins and that mediates their recycling from the Golgi back to the endoplasmic reticulum. The protein is ER lumen protein-retaining receptor 1 (kdelr1) of Xenopus tropicalis (Western clawed frog).